Consider the following 505-residue polypeptide: Maturase K (505 aa).

Belongs to the intron maturase 2 family. MatK subfamily.

It is found in the plastid. Its subcellular location is the chloroplast. Functionally, usually encoded in the trnK tRNA gene intron. Probably assists in splicing its own and other chloroplast group II introns. In Gomphrena pulchella (Globe amaranth), this protein is Maturase K.